Here is an 84-residue protein sequence, read N- to C-terminus: uncharacterized protein (84 aa).

Positions 1 to 83 constitute an LITAF domain; sequence MDDKFTTLPC…CKQAVFVYKI (83 aa). 2 residues coordinate Zn(2+): C21 and C24. Positions 39-61 are membrane-binding amphipathic helix; that stretch reads MSWVVCTAITLACLPCCCIPFLC. 2 residues coordinate Zn(2+): C71 and C74.

It localises to the host membrane. This is an uncharacterized protein from Dryophytes versicolor (chameleon treefrog).